The sequence spans 370 residues: ADP-ribosylation factor-like protein 13B (370 aa).

4 S-palmitoyl cysteine lipidation sites follow: Cys-12, Cys-13, Cys-14, and Cys-15. Residues 31–38 (GIGSAGKT), 75–79 (DVGGD), and 134–137 (NNQN) contribute to the GTP site. A Glycyl lysine isopeptide (Lys-Gly) (interchain with G-Cter in SUMO) cross-link involves residue Lys-239. A disordered region spans residues 255-331 (RNQPPVQPPI…PVSPESNSVK (77 aa)). Residues 259 to 271 (PVQPPIPPDPPSD) are compositionally biased toward pro residues. Polar residues-rich tracts occupy residues 287–303 (LASSTIPSDIIQSTPET) and 314–328 (RISQTSTKPVSPESN). Lys-331 participates in a covalent cross-link: Glycyl lysine isopeptide (Lys-Gly) (interchain with G-Cter in SUMO). The RVVP region stretch occupies residues 366–369 (RVVP).

Belongs to the small GTPase superfamily. Arf family. As to quaternary structure, monomer. Post-translationally, sumoylation regulates the targeting of membrane sensory receptors to the cilium. As to expression, specifically expressed in ciliated sensory neurons throughout development in both hermaphrodites.

The protein resides in the cell projection. It localises to the cilium membrane. In terms of biological role, cilium-specific protein required to control the microtubule-based, ciliary axoneme structure. Required for normal sensory cilium function. May act by maintaining the association between IFT subcomplexes A and B. This Caenorhabditis elegans protein is ADP-ribosylation factor-like protein 13B (arl-13).